Consider the following 334-residue polypeptide: Replication-associated protein (334 aa).

In terms of domain architecture, CRESS-DNA virus Rep endonuclease spans 9–111; it reads RLQSKYVFLT…DGDIKTRGDF (103 aa). The RCR-1 signature appears at 16-19; it reads FLTY. A divalent metal cation is bound by residues Glu50, His58, and His60. Residues 58–60 carry the RCR-2 motif; sequence HYH. The For DNA cleavage activity role is filled by Tyr98. An RCR-3 motif is present at residues 98–101; it reads YISK. A divalent metal cation is bound at residue Asp102. The segment at 160–172 is oligomerization; the sequence is SANKLFPPQPEQY. Position 213–220 (213–220) interacts with ATP; that stretch reads GPTRTGKT. Positions 236–254 are transactivation; it reads IDFTNYDEHATYNIIDDIP. A Nuclear localization signal motif is present at residues 276-286; that stretch reads KYGKKKKIKGG.

The protein belongs to the geminiviridae Rep protein family. As to quaternary structure, homooligomer. Rep binds to repeated DNA motifs (iterons). Forms the O-complex, which is a Rep-DNA complex involved in the initiation of RCR. Part of the C- and V-complexes which are RepA-Rep-DNA complexes involved in the c-sense and v-sense transcription. Mg(2+) serves as cofactor. It depends on Mn(2+) as a cofactor.

The protein resides in the host nucleus. Essential for the replication of viral ssDNA. The closed circular ssDNA genome is first converted to a superhelical dsDNA. Rep binds a specific region at the genome origin of replication. It introduces an endonucleolytic nick within the conserved sequence 5'-TAATATTAC-3' in the intergenic region of the genome present in all geminiviruses, thereby initiating the rolling circle replication (RCR). Following cleavage, binds covalently to the 5'-phosphate of DNA as a tyrosyl ester. The cleavage gives rise to a free 3'-OH that serves as a primer for the cellular DNA polymerase. The polymerase synthesizes the (+) strand DNA by rolling circle mechanism. After one round of replication, a Rep-catalyzed nucleotidyl transfer reaction releases a circular single-stranded virus genome, thereby terminating the replication. Displays origin-specific DNA cleavage, nucleotidyl transferase, ATPase and helicase activities. Acts a an inhibitor of C-sense gene transcription. The polypeptide is Replication-associated protein (Phaseolus vulgaris (Kidney bean)).